Here is a 454-residue protein sequence, read N- to C-terminus: Ornithine aminotransferase (454 aa).

Pyridoxal 5'-phosphate is bound by residues G124, T125, and Q267. K293 is modified (N6-(pyridoxal phosphate)lysine). T321 is a binding site for pyridoxal 5'-phosphate.

Belongs to the class-III pyridoxal-phosphate-dependent aminotransferase family. As to quaternary structure, homotetramer; dimer of dimers. Requires pyridoxal 5'-phosphate as cofactor.

The catalysed reaction is L-ornithine + 2-oxoglutarate = L-glutamate 5-semialdehyde + L-glutamate. It catalyses the reaction L-lysine + 2-oxoglutarate = (S)-2-amino-6-oxohexanoate + L-glutamate. Functionally, catalyzes the conversion of L-ornithine and 2-oxoglutarate to L-glutamate semialdehyde and L-glutamate. L-ornithine is the best substrate, but the enzyme also shows good activity toward L-lysine, and low activity toward D-ornithine, D-lysine, 5-aminovalerate, 6-aminohexanoate and GABA. The enzyme activity is specific for 2-oxoglutarate. This Pyrococcus horikoshii (strain ATCC 700860 / DSM 12428 / JCM 9974 / NBRC 100139 / OT-3) protein is Ornithine aminotransferase.